Reading from the N-terminus, the 342-residue chain is MANSVLTATYEGYIRDTADALRIFEACLTGSLTHTARRPHDRERSTLITSGNVFVYEEGSSGIKRWTDGVNWSPSRILGNFLVYREMNQPFSPGEKKRASKKPKKQAGVAKAYDHRPQATRFSSMPNDPAGVCAGGDGGAGDEDRDLVGSLTDSYDFKPNSLIKKTISITHNGIPHHLVSYYTVDDVRSGRLVRPSDHEFFGRVQPRMELMSGQNFRVPLEDGGDEESRGVMSHGQQVMPYPCNDYQIFQHAYGNAAAPRTGQFTYGPPQNGTYAPVSVPATHAIQNGTYAPVSVPATPALQNGTYLPVPAPQNGSYYNLHQNVHQNVHQNPAYPWYHAQLQ.

The disordered stretch occupies residues 91–113; sequence FSPGEKKRASKKPKKQAGVAKAY.

Belongs to the MIT1/WOR1 family.

The protein localises to the nucleus. In terms of biological role, global transcriptional regulator of pathogenicity. Regulates many genes during growth in putrescine medium and during infection. Involved in the developmental processes of conidium formation and sexual reproduction and modulates a morphological change that accompanies mycotoxin production. The polypeptide is Global transcription regulator FGP1 (Gibberella zeae (strain ATCC MYA-4620 / CBS 123657 / FGSC 9075 / NRRL 31084 / PH-1) (Wheat head blight fungus)).